A 242-amino-acid polypeptide reads, in one-letter code: Small ribosomal subunit protein uS3 (242 aa).

Positions 39 to 109 constitute a KH type-2 domain; sequence IRQYVKATLA…QIRINVVEVT (71 aa). The tract at residues 220-242 is disordered; that stretch reads KVNQPKRRQQKRRQQYDDRSNEG. A compositionally biased stretch (basic residues) spans 223-232; it reads QPKRRQQKRR. Residues 233-242 show a composition bias toward basic and acidic residues; it reads QQYDDRSNEG.

The protein belongs to the universal ribosomal protein uS3 family. As to quaternary structure, part of the 30S ribosomal subunit. Forms a tight complex with proteins S10 and S14.

In terms of biological role, binds the lower part of the 30S subunit head. Binds mRNA in the 70S ribosome, positioning it for translation. The chain is Small ribosomal subunit protein uS3 from Trichodesmium erythraeum (strain IMS101).